Consider the following 944-residue polypeptide: Isoleucine--tRNA ligase (944 aa).

Positions 58–68 match the 'HIGH' region motif; that stretch reads PYANGSIHIGH. E563 lines the L-isoleucyl-5'-AMP pocket. A 'KMSKS' region motif is present at residues 604-608; sequence KMSKS. K607 provides a ligand contact to ATP. Zn(2+) is bound by residues C907, C910, C927, and C930.

The protein belongs to the class-I aminoacyl-tRNA synthetase family. IleS type 1 subfamily. Monomer. It depends on Zn(2+) as a cofactor.

It is found in the cytoplasm. The enzyme catalyses tRNA(Ile) + L-isoleucine + ATP = L-isoleucyl-tRNA(Ile) + AMP + diphosphate. In terms of biological role, catalyzes the attachment of isoleucine to tRNA(Ile). As IleRS can inadvertently accommodate and process structurally similar amino acids such as valine, to avoid such errors it has two additional distinct tRNA(Ile)-dependent editing activities. One activity is designated as 'pretransfer' editing and involves the hydrolysis of activated Val-AMP. The other activity is designated 'posttransfer' editing and involves deacylation of mischarged Val-tRNA(Ile). The polypeptide is Isoleucine--tRNA ligase (Salmonella paratyphi A (strain ATCC 9150 / SARB42)).